A 303-amino-acid polypeptide reads, in one-letter code: UDP-3-O-acyl-N-acetylglucosamine deacetylase (303 aa).

Zn(2+)-binding residues include His-78, His-237, and Asp-241. Catalysis depends on His-264, which acts as the Proton donor.

The protein belongs to the LpxC family. Zn(2+) is required as a cofactor.

It carries out the reaction a UDP-3-O-[(3R)-3-hydroxyacyl]-N-acetyl-alpha-D-glucosamine + H2O = a UDP-3-O-[(3R)-3-hydroxyacyl]-alpha-D-glucosamine + acetate. Its pathway is glycolipid biosynthesis; lipid IV(A) biosynthesis; lipid IV(A) from (3R)-3-hydroxytetradecanoyl-[acyl-carrier-protein] and UDP-N-acetyl-alpha-D-glucosamine: step 2/6. Functionally, catalyzes the hydrolysis of UDP-3-O-myristoyl-N-acetylglucosamine to form UDP-3-O-myristoylglucosamine and acetate, the committed step in lipid A biosynthesis. This chain is UDP-3-O-acyl-N-acetylglucosamine deacetylase, found in Pseudomonas putida (strain GB-1).